Here is a 196-residue protein sequence, read N- to C-terminus: Nucleoid occlusion factor SlmA (196 aa).

Positions 7 to 68 (TNRREEILQA…GLIEFIEDSI (62 aa)) constitute an HTH tetR-type domain. The segment at residues 31–50 (TTAKLAAQVGVSEAALYRHF) is a DNA-binding region (H-T-H motif). The stretch at 115-142 (EQDRLQSRINQLFERIETQLRQVLRERK) forms a coiled coil.

This sequence belongs to the nucleoid occlusion factor SlmA family. Homodimer. Interacts with FtsZ.

It localises to the cytoplasm. The protein resides in the nucleoid. In terms of biological role, required for nucleoid occlusion (NO) phenomenon, which prevents Z-ring formation and cell division over the nucleoid. Acts as a DNA-associated cell division inhibitor that binds simultaneously chromosomal DNA and FtsZ, and disrupts the assembly of FtsZ polymers. SlmA-DNA-binding sequences (SBS) are dispersed on non-Ter regions of the chromosome, preventing FtsZ polymerization at these regions. The chain is Nucleoid occlusion factor SlmA from Photobacterium profundum (strain SS9).